The chain runs to 500 residues: Protein dcd1B (500 aa).

The N-terminal stretch at M1–S20 is a signal peptide. N-linked (GlcNAc...) asparagine glycosylation is found at N284, N331, N441, N459, N474, and N475. The interval F464–N500 is disordered. A compositionally biased stretch (low complexity) spans N475–N500.

The protein resides in the secreted. The sequence is that of Protein dcd1B (dcd1B) from Dictyostelium discoideum (Social amoeba).